Reading from the N-terminus, the 536-residue chain is Apoptosis inhibitor 5 homolog (536 aa).

Residues 462–536 (ITFGEKAAAN…GYRNRRFNKY (75 aa)) form a disordered region. Residues 472–487 (GKDKDQEPEKKSRPSN) are compositionally biased toward basic and acidic residues. Polar residues predominate over residues 498 to 507 (KYSNKVNQSY). Residues 516 to 528 (RGGGGGGGSGGGY) are compositionally biased toward gly residues.

Belongs to the API5 family.

The protein resides in the nucleus. In terms of biological role, antiapoptotic factor. Also known to efficiently suppress E2F1-induced apoptosis. This Drosophila melanogaster (Fruit fly) protein is Apoptosis inhibitor 5 homolog.